We begin with the raw amino-acid sequence, 145 residues long: Lysozyme-like protein 4 (145 aa).

An N-terminal signal peptide occupies residues 1–19 (MQLYLVLLLISYLLTPIGA). Residues 20–145 (SILGRCVVAK…LDRWLDGCEL (126 aa)) form the C-type lysozyme domain. Disulfide bonds link Cys-25–Cys-143, Cys-49–Cys-130, Cys-84–Cys-95, and Cys-91–Cys-109. Glu-54 is a catalytic residue.

This sequence belongs to the glycosyl hydrolase 22 family. Monomer. As to expression, expressed in the brain, lung, ovary, uterus and testis. In testis expressed in the germinal epithelium and on the maturing spermatozoa (at protein level).

The protein resides in the secreted. Its subcellular location is the cytoplasmic vesicle. It is found in the secretory vesicle. It localises to the acrosome. The protein localises to the cell projection. The protein resides in the cilium. Its subcellular location is the flagellum. Functionally, may be involved in fertilization. Has no detectable bacteriolytic and lysozyme activities in vitro. In Rattus norvegicus (Rat), this protein is Lysozyme-like protein 4 (Lyzl4).